Consider the following 258-residue polypeptide: Putative cysteine-rich repeat secretory protein 16 (258 aa).

Residues 1 to 30 (MYYSSPTCFVLITIFAVVVTQLIFMRTVSS) form the signal peptide. Gnk2-homologous domains lie at 37–139 (YLNH…PFDT) and 144–247 (DKDN…LYPF).

It belongs to the cysteine-rich repeat secretory protein family.

It is found in the secreted. This Arabidopsis thaliana (Mouse-ear cress) protein is Putative cysteine-rich repeat secretory protein 16 (CRRSP16).